Reading from the N-terminus, the 262-residue chain is Late embryogenesis abundant protein 31 (262 aa).

The short motif at 6-10 (QPKRP) is the Nuclear localization signal (NLS) element. SMP domains follow at residues 14–68 (VTYG…ANKR), 136–192 (ITIG…NHNA), and 201–260 (IKLI…NERA).

The protein belongs to the LEA type SMP family. Embryo specific, only in dry mature seeds.

The protein localises to the nucleus. The protein resides in the nucleolus. It is found in the cytoplasm. LEA proteins are late embryonic proteins abundant in higher plant seed embryos. The function of those proteins is not known. Promotes germination rate. Enhances cation toxicity (e.g. lithium ion) and osmotic stress (e.g. NaCl and sorbitol) tolerance during germination and in seedlings. This Arabidopsis thaliana (Mouse-ear cress) protein is Late embryogenesis abundant protein 31.